A 502-amino-acid polypeptide reads, in one-letter code: Ubiquitin-associated protein 1 (502 aa).

Positions 1–95 are interaction with ESCRT-I; sequence MASKKLGTDV…AEAKVNSKSG (95 aa). Residues 17–63 enclose the UMA domain; the sequence is LDDVPFKIGDKFKTPAKVGLPIGFSLPDCLQVVREMQYDFSLEKKTI. Residues 80-100 show a composition bias toward basic and acidic residues; the sequence is ERKAEEAEAKVNSKSGPEGDS. Disordered stretches follow at residues 80–117 and 135–156; these read ERKA…PPPI and VSSS…DFNP. Residues S146, S205, and S289 each carry the phosphoserine modification. An interaction with PTPN23 region spans residues 260-290; the sequence is VSNIKSLSFPKLDSDDSNQKTVKLASTFHST. UBA domains follow at residues 389–430 and 451–498; these read SPSE…LFAH and QCSE…LMAR.

In terms of assembly, component of an ESCRT-I complex (endosomal sorting complex required for transport I) which consists of TSG101, VPS28, VPS37A and UBAP1 in a 1:1:1:1 stoichiometry. Interacts with PTPN23. Interacts (via UBA domains) with ubiquitinated proteins. Ubiquitous. Highly expressed in heart, liver, brain, kidney, spleen, skeletal muscle, stomach, testis and lung.

It is found in the cytoplasm. It localises to the cytosol. Its subcellular location is the endosome. Functionally, component of the ESCRT-I complex, a regulator of vesicular trafficking process. Binds to ubiquitinated cargo proteins and is required for the sorting of endocytic ubiquitinated cargos into multivesicular bodies (MVBs). Plays a role in the proteasomal degradation of ubiquitinated cell-surface proteins, such as EGFR and BST2. In Mus musculus (Mouse), this protein is Ubiquitin-associated protein 1.